We begin with the raw amino-acid sequence, 66 residues long: Myrmicitoxin(1)-Pr5a (66 aa).

The N-terminal stretch at 1–25 (MRSLYLSFSLTIIFVLVIMHAEAKA) is a signal peptide. Residues 26 to 37 (ISEPNAIAEADP) constitute a propeptide that is removed on maturation. V65 is subject to Valine amide.

It belongs to the formicidae venom clade 3 family. In terms of tissue distribution, expressed by the venom gland.

It is found in the secreted. In terms of biological role, toxin that causes a rapid and irreversible paralysis when intrathoracically injected into insects (blowflies). Does not cause spontaneous nocifensive behaviors by intraplantar injection in mice. Exhibits hemolytic and cytotoxic activities on HEK293 cells. This is Myrmicitoxin(1)-Pr5a from Pogonomyrmex rugosus (Desert harvester ant).